The chain runs to 278 residues: 3-methyl-2-oxobutanoate hydroxymethyltransferase (278 aa).

The Mg(2+) site is built by Asp43 and Asp82. Residues 43-44 (DS), Asp82, and Lys112 contribute to the 3-methyl-2-oxobutanoate site. Residue Glu114 coordinates Mg(2+). Catalysis depends on Glu181, which acts as the Proton acceptor.

It belongs to the PanB family. In terms of assembly, homodecamer; pentamer of dimers. The cofactor is Mg(2+).

It is found in the cytoplasm. It carries out the reaction 3-methyl-2-oxobutanoate + (6R)-5,10-methylene-5,6,7,8-tetrahydrofolate + H2O = 2-dehydropantoate + (6S)-5,6,7,8-tetrahydrofolate. It functions in the pathway cofactor biosynthesis; (R)-pantothenate biosynthesis; (R)-pantoate from 3-methyl-2-oxobutanoate: step 1/2. Functionally, catalyzes the reversible reaction in which hydroxymethyl group from 5,10-methylenetetrahydrofolate is transferred onto alpha-ketoisovalerate to form ketopantoate. The protein is 3-methyl-2-oxobutanoate hydroxymethyltransferase of Bacillus cereus (strain ATCC 14579 / DSM 31 / CCUG 7414 / JCM 2152 / NBRC 15305 / NCIMB 9373 / NCTC 2599 / NRRL B-3711).